The following is a 420-amino-acid chain: 26S proteasome non-ATPase regulatory subunit 4 (420 aa).

In terms of domain architecture, VWFA spans 1-174 (MSQEATIIAV…TGSHLISVAP (174 aa)). UIM domains follow at residues 210-229 (AEDPDLLYALRVSMEDQRMR), 255-274 (SEEAMLQQALAMSMQMNNTE), and 288-307 (SEEDQIAYALRMSLQQMGEE). Residues 392–420 (RKAINALTKSQSQRGSKKDEKEDEDKQNS) form a disordered region. Basic and acidic residues predominate over residues 407–420 (SKKDEKEDEDKQNS).

Belongs to the proteasome subunit S5A family. The 26S proteasome is composed of a core protease, known as the 20S proteasome, capped at one or both ends by the 19S regulatory complex (RC). The RC is composed of at least 18 different subunits in two subcomplexes, the base and the lid, which form the portions proximal and distal to the 20S proteolytic core, respectively.

Functionally, binds and presumably selects ubiquitin-conjugates for destruction. This Schistosoma mansoni (Blood fluke) protein is 26S proteasome non-ATPase regulatory subunit 4.